The chain runs to 1506 residues: Transcriptional repressor NF-X1 homolog (1506 aa).

Residues 1–12 are compositionally biased toward polar residues; sequence MEESQNIPPKTQ. Disordered regions lie at residues 1–123, 142–164, and 181–282; these read MEES…NNQL, LKSE…QEPT, and KAFV…KKDI. 2 stretches are compositionally biased toward low complexity: residues 13 to 103 and 110 to 121; these read TLNN…SNSN and HNNNYNNNNNNN. A compositionally biased stretch (low complexity) spans 194–209; sequence NNTNNNNNNNNNNNNN. Residues 217–232 are compositionally biased toward basic and acidic residues; the sequence is DNNRPQRERRERKPKE. Pro residues predominate over residues 240–252; that stretch reads PQQPQQPQQPQPQ. Residues 253 to 263 are compositionally biased toward low complexity; it reads PQQQQQSQQQQ. Over residues 267-282 the composition is skewed to basic and acidic residues; that stretch reads ENNRKKENKLQSKKDI. A PHD-type zinc finger spans residues 363-416; it reads IYECMVCFENVGKNAVIWSCSQCFTMFHSSCIKQWSSKSVTTEGKWKCPGCRYN. The segment at 366 to 414 adopts an RING-type; degenerate zinc-finger fold; sequence CMVCFENVGKNAVIWSCSQCFTMFHSSCIKQWSSKSVTTEGKWKCPGCR. NF-X1-type zinc fingers lie at residues 460–478, 515–534, 581–600, 642–661, 739–758, 796–817, and 852–868; these read CPHS…NCSS, CGNH…PCEV, CGNH…PCSL, CKQH…SCKV, CGVH…NCYI, CGHS…PCTY, and CLSH…PCLI. 2 disordered regions span residues 897 to 1012 and 1021 to 1040; these read QQSK…VDLN and NEEE…DEDE. A compositionally biased stretch (low complexity) spans 903-921; that stretch reads TTTTTTTTTTSTTSTTSPK. Acidic residues predominate over residues 925-934; the sequence is KDEELIEDDN. Positions 935-980 are enriched in low complexity; that stretch reads NNNNNNNNNNNNNNNNNNNNNNNNNNNNNNNNNNNNNNNNNNNNNN. Basic and acidic residues-rich tracts occupy residues 981 to 1002 and 1021 to 1031; these read EKAE…HSDD and NEEEERIKKEE. The NF-X1-type 8 zinc-finger motif lies at 1062 to 1084; it reads CEHTCHQACHPGEPCPTNISCKQ. 2 disordered regions span residues 1132 to 1167 and 1447 to 1473; these read SHTL…SSPT and NQNQ…IKPT. Low complexity-rich tracts occupy residues 1137–1167 and 1447–1470; these read NNPN…SSPT and NQNQ…NINI.

It belongs to the NFX1 family.

It is found in the nucleus. May play a role in transcription regulation. The chain is Transcriptional repressor NF-X1 homolog (nfx1) from Dictyostelium discoideum (Social amoeba).